A 238-amino-acid chain; its full sequence is Probable RNA/DNA demethylase ALKBH6 (238 aa).

The 132-residue stretch at 96 to 227 (PANHVLVNQY…RVSLTIRRVP (132 aa)) folds into the Fe2OG dioxygenase domain. Positions 103 and 105 each coordinate 2-oxoglutarate. Residues His-114 and Asp-116 each contribute to the Fe cation site. A disordered region spans residues 138 to 161 (YEPRRPEDDDPTEQPRPPPRPTTS). His-182 contributes to the Fe cation binding site. The 2-oxoglutarate site is built by Arg-218 and Ser-220.

This sequence belongs to the alkB family. In terms of assembly, interacts with VCPKMT. Requires Fe(2+) as cofactor. In terms of tissue distribution, widely expressed, with highest expression in testis and pancreas.

Its subcellular location is the cytoplasm. The protein localises to the nucleus. Its function is as follows. Probable Fe(2+)/2-oxoglutarate-dependent dioxygenase involved in oxidative demethylation of nucleic acids. Binds nucleic acids with a preference for ssDNA or ssRNA to other types of DNAs. May play a role in nucleic acid damage repair. This is Probable RNA/DNA demethylase ALKBH6 from Homo sapiens (Human).